The primary structure comprises 298 residues: Ribosomal protein L11 methyltransferase (298 aa).

4 residues coordinate S-adenosyl-L-methionine: Thr148, Gly169, Asp191, and Asn233.

The protein belongs to the methyltransferase superfamily. PrmA family.

It localises to the cytoplasm. The enzyme catalyses L-lysyl-[protein] + 3 S-adenosyl-L-methionine = N(6),N(6),N(6)-trimethyl-L-lysyl-[protein] + 3 S-adenosyl-L-homocysteine + 3 H(+). Its function is as follows. Methylates ribosomal protein L11. The protein is Ribosomal protein L11 methyltransferase of Marinobacter nauticus (strain ATCC 700491 / DSM 11845 / VT8) (Marinobacter aquaeolei).